The following is a 788-amino-acid chain: Spastin (788 aa).

The interval 1 to 105 (MVRTKNQSSS…PRSAGGPSSV (105 aa)) is disordered. Residues 1 to 116 (MVRTKNQSSS…KQNLYVVSFP (116 aa)) are Cytoplasmic-facing. Residues 1–227 (MVRTKNQSSS…NRSGSGYSPG (227 aa)) form a required for localization to punctate cytoplasmic foci region. Composition is skewed to low complexity over residues 8-48 (SSSS…SSHR) and 57-75 (ATNVSSSSNRRTTPGSSPD). The helical intramembrane region spans 117 to 137 (IIFLFNVLRSLIYQLFCIFRY). Residues 138–788 (LYGASTKVIY…WSSDYGDITI (651 aa)) lie on the Cytoplasmic side of the membrane. The segment at 227-788 (GPGDPLLAKQ…WSSDYGDITI (562 aa)) is sufficient for interaction with microtubules and microtubule severing. Positions 240-315 (HRRAFEYISK…SMARDRLHFL (76 aa)) constitute an MIT domain. Over residues 330-353 (KEEQKPNPSREQHQKPQKAREAAD) the composition is skewed to basic and acidic residues. Residues 330 to 484 (KEEQKPNPSR…SGSGSGASTP (155 aa)) are disordered. Positions 380-400 (LTTPRISATATTPTSSSSLAS) are enriched in low complexity. Polar residues-rich tracts occupy residues 419–433 (NKSQTLPRNLGSKTS) and 453–469 (QFSSGRNTPPQRSRTPI). The interval 471 to 485 (NNGASGSGSGASTPV) is required for interaction with microtubules. 553–560 (GPPGNGKT) lines the ATP pocket.

Belongs to the AAA ATPase family. Spastin subfamily. As to quaternary structure, homohexamer. The homohexamer is stabilized by ATP-binding. The homohexamer may adopt a ring conformation through which microtubules pass prior to being severed. Interacts with microtubules. Interacts with atl; may be involved in microtubule dynamics.

It localises to the membrane. The protein localises to the cytoplasm. It is found in the cytoskeleton. Its subcellular location is the microtubule organizing center. The protein resides in the centrosome. It localises to the chromosome. The protein localises to the lipid droplet. It catalyses the reaction n ATP + n H2O + a microtubule = n ADP + n phosphate + (n+1) alpha/beta tubulin heterodimers.. In terms of biological role, ATP-dependent microtubule severing protein. Stimulates microtubule minus-end depolymerization and poleward microtubule flux in the mitotic spindle. Regulates microtubule stability in the neuromuscular junction synapse. Involved in lipid metabolism by regulating the size and distribution of lipid droplets. Involved in axon regeneration by regulating microtubule severing. The polypeptide is Spastin (Drosophila pseudoobscura pseudoobscura (Fruit fly)).